Reading from the N-terminus, the 508-residue chain is GTPase Obg (508 aa).

In terms of domain architecture, Obg spans 2–159 (ARFVDRVVLH…HDVILELKSM (158 aa)). The region spanning 160–341 (ADIGLVGFPS…LKYAMLDLVQ (182 aa)) is the OBG-type G domain. GTP is bound by residues 166-173 (GFPSAGKS), 191-195 (FTTLQ), 212-215 (DVPG), 292-295 (NKAD), and 322-324 (SAV). Ser173 and Thr193 together coordinate Mg(2+). The 81-residue stretch at 364–444 (DARKKNKDFE…IGEVSFEWEP (81 aa)) folds into the OCT domain.

This sequence belongs to the TRAFAC class OBG-HflX-like GTPase superfamily. OBG GTPase family. As to quaternary structure, monomer. Mg(2+) is required as a cofactor.

It localises to the cytoplasm. In terms of biological role, an essential GTPase which binds GTP, GDP and possibly (p)ppGpp with moderate affinity, with high nucleotide exchange rates and a fairly low GTP hydrolysis rate. Plays a role in control of the cell cycle, stress response, ribosome biogenesis and in those bacteria that undergo differentiation, in morphogenesis control. This Corynebacterium diphtheriae (strain ATCC 700971 / NCTC 13129 / Biotype gravis) protein is GTPase Obg.